Here is a 1356-residue protein sequence, read N- to C-terminus: Collagen alpha-2(I) chain (1356 aa).

The first 22 residues, 1–22, serve as a signal peptide directing secretion; sequence MLSFVDNRILLLLAVTSLLASC. The tract at residues 22 to 1112 is disordered; the sequence is CQSGGLKGPR…DQSGGYDEYR (1091 aa). 2 positions are modified to pyrrolidone carboxylic acid: Gln23 and Gln73. A propeptide spans 23 to 72 (N-terminal propeptide); it reads QSGGLKGPRGAKGPRGDRGPQGPNGRDGKAGLPGIAGPPGPPGLGGNFAA. The span at 76–88 shows a compositional bias: gly residues; sequence GGKGSDPGPGPMG. Lys78 is modified (allysine). Lys171 is subject to 5-hydroxylysine; alternate. A glycan (O-linked (Gal...) hydroxylysine; alternate) is linked at Lys171. Over residues 219 to 248 the composition is skewed to low complexity; it reads AGPAGPAGARGADGSTGPAGPAGPLGAAGP. Gly residues predominate over residues 259-280; it reads GEIGGAGSNGPSGPQGGRGEPG. Positions 281–315 are enriched in low complexity; the sequence is INGAVGPVGPVGNPGNNGINGAKGAAGLPGVAGAP. A compositionally biased stretch (pro residues) spans 317-327; the sequence is FPGPRGGPGPQ. Gly residues-rich tracts occupy residues 334–343, 391–412, 418–427, and 448–457; these read GARGLGGDPG, GARG…GPIG, GATGPGGIRG, and GNSGQGGPPG. The segment covering 479 to 489 has biased composition (low complexity); it reads PRGQPGNIGFP. Residues 511–520 are compositionally biased toward gly residues; the sequence is GLRGGPGADG. Low complexity-rich tracts occupy residues 521-564 and 587-603; these read NNGA…AGKA and NSGP…IGAR. 2 stretches are compositionally biased toward gly residues: residues 610 to 619 and 628 to 646; these read GPDGGKGEPG and GHQG…GTPG. Basic and acidic residues predominate over residues 648-659; it reads KGEKGEGGHRGL. Positions 716–731 are enriched in low complexity; it reads LPGFAGPPGSDGQSGP. A compositionally biased stretch (gly residues) spans 736 to 745; the sequence is GPAGGKGDVG. Composition is skewed to low complexity over residues 746-764 and 776-786; these read PAGP…ASGP and PSGLTGFPGAA. Positions 787 to 796 are enriched in gly residues; the sequence is GRVGGPGPAG. Low complexity predominate over residues 797-809; that stretch reads IAGPPGSAGPAGK. A compositionally biased stretch (gly residues) spans 817-826; the sequence is GDPGPGGPQG. The span at 827–858 shows a compositional bias: low complexity; the sequence is EQGVVGPAGISGDKGPSGESGPPGAPGTAGPQ. The span at 877 to 886 shows a compositional bias: gly residues; it reads GLPGGPGAVG. A compositionally biased stretch (low complexity) spans 888 to 903; the sequence is PGRLGPAGASGPRGPA. The segment covering 976-985 has biased composition (gly residues); it reads GPTGNGGPVG. Positions 999 to 1013 are enriched in basic and acidic residues; it reads RGEKGGAGEKGDRGM. Over residues 1083–1095 the composition is skewed to pro residues; the sequence is AGPPGSPGLPGPA. The propeptide at 1114–1356 is C-terminal propeptide; the sequence is DQPSFRAKDY…GLDIGPVCFK (243 aa). The region spanning 1123–1356 is the Fibrillar collagen NC1 domain; sequence YEVDATIKSL…GLDIGPVCFK (234 aa). Intrachain disulfides connect Cys1153-Cys1185, Cys1193-Cys1354, and Cys1262-Cys1307. Ca(2+)-binding residues include Asp1171, Asn1173, Gln1174, Cys1176, and Asp1179. Asn1257 carries N-linked (GlcNAc...) asparagine glycosylation.

It belongs to the fibrillar collagen family. Trimers of one alpha 2(I) and two alpha 1(I) chains. Prolines at the third position of the tripeptide repeating unit (G-X-Y) are hydroxylated in some or all of the chains. Forms the fibrils of tendon, ligaments and bones. In bones the fibrils are mineralized with calcium hydroxyapatite.

Its subcellular location is the secreted. It is found in the extracellular space. It localises to the extracellular matrix. Functionally, type I collagen is a member of group I collagen (fibrillar forming collagen). In Oncorhynchus mykiss (Rainbow trout), this protein is Collagen alpha-2(I) chain (col1a2).